We begin with the raw amino-acid sequence, 168 residues long: NADH-quinone oxidoreductase subunit B (168 aa).

Positions 49, 50, 114, and 144 each coordinate [4Fe-4S] cluster.

The protein belongs to the complex I 20 kDa subunit family. NDH-1 is composed of 14 different subunits. Subunits NuoB, C, D, E, F, and G constitute the peripheral sector of the complex. [4Fe-4S] cluster serves as cofactor.

The protein resides in the cell membrane. It catalyses the reaction a quinone + NADH + 5 H(+)(in) = a quinol + NAD(+) + 4 H(+)(out). NDH-1 shuttles electrons from NADH, via FMN and iron-sulfur (Fe-S) centers, to quinones in the respiratory chain. Couples the redox reaction to proton translocation (for every two electrons transferred, four hydrogen ions are translocated across the cytoplasmic membrane), and thus conserves the redox energy in a proton gradient. The polypeptide is NADH-quinone oxidoreductase subunit B (Wolbachia pipientis wMel).